A 348-amino-acid chain; its full sequence is VIP36-like protein (348 aa).

Positions 1–44 (MAATLGPLGSWQQWRRCLSARDGSRMLLLLLLLGSGQGPQQVGA) are cleaved as a signal peptide. Over 45 to 313 (GQTFEYLKRE…APLPPLSGLA (269 aa)) the chain is Lumenal. In terms of domain architecture, L-type lectin-like spans 49 to 274 (EYLKREHSLS…DVISLKLFEL (226 aa)). Residues Ser-93 and Asp-128 each coordinate a carbohydrate. 3 residues coordinate Ca(2+): Asp-159, Tyr-161, and Asn-163. 161–163 (YPN) is an a carbohydrate binding site. Asn-181 carries N-linked (GlcNAc...) (high mannose) asparagine glycosylation. His-188 is an a carbohydrate binding site. Residue Asp-191 coordinates Ca(2+). Cys-200 and Cys-237 are oxidised to a cystine. A carbohydrate is bound at residue 258–260 (GDL). The helical transmembrane segment at 314–336 (LFLIVFFSLVFSVFAIVIGIILY) threads the bilayer. Topologically, residues 337–348 (NKWQEQSRKRFY) are cytoplasmic. The short motif at 344 to 346 (RKR) is the Endoplasmic reticulum retention signal element.

In terms of tissue distribution, expressed in numerous tissues. Highest expression in skeletal muscle and kidney, intermediate levels in heart, liver and placenta, low levels in brain, thymus, spleen, small intestine and lung.

The protein resides in the endoplasmic reticulum membrane. It is found in the golgi apparatus membrane. Functionally, may be involved in the regulation of export from the endoplasmic reticulum of a subset of glycoproteins. May function as a regulator of ERGIC-53. In Homo sapiens (Human), this protein is VIP36-like protein (LMAN2L).